We begin with the raw amino-acid sequence, 832 residues long: MMELLSNNSVPQQMASSNAPSANNVAHSSTANGSGGGSVSSNASNSSERLLAGILESFPAWDLNVGLLPNVGQSSPPRADFFINNFLGGLDTHGDFSIGPIGSGARSNPKMSPESSNNSSISCGWCEVSASIRCLECNEFMCNDCLREHRNSPLSSNHSIVSLPTPIGASPTGGSSVNAQTPPSGNFICDIHNEMLRYVCDYCRKLVCQCCTLHEHKEHSYASIQSFMVGSKEKLEGAIESSQVGTRCIKSSIDKALAFIRLIERNCSELSDNIRKAFRQFIIAIEDRERFLLDFVEKLRQRRLAILHDQMAGLKSALAGLSETSDMLSKVADNACNMDQIEIAMKLTNGQRQMEQFAGIYKDLQPKQEVFAFAPPDYSLLQDIRNQGGVILVDDKNLPIVSSSNGIVPSVSSVNAVAAASVGVVGGVAGVVGGVGVSNGLDLAFGMNMPNNPLSVASSSVRRPLLRDNSFRIPSPIMQPRGGSACGMSSGMSSAALDWELNGLRSSPGLHFSAPRTTQAIPGCMDLVKVRNSNALSLSFATEGHEDGQVSRPWGLCVDKMGHVLVSDRRNNRVQVFNPDGSLKFKFGRKGVGNGEFDLPAGICVDVDNRIIVVDKDNHRVQIFTASGVFLLKFGSYGKEYGQFQYPWDVAVNSRRQIVVTDSRNHRIQQFDSEGRFIRQIVFDNHGQTKGIASPRGVCYTPTGNIIVSDFDNHCLYLIDPDINDILSVKGHEGSGFHEFNRPSGLCCDDEGRIIVADSKNQRILVFNQNLDFMWDIEVRPSINPLMPPTLDEKDRTCDVAIMPDGRIVFLIELSPDSKEGSNPYKRFVHVF.

Over residues 1–14 (MMELLSNNSVPQQM) the composition is skewed to polar residues. Positions 1–42 (MMELLSNNSVPQQMASSNAPSANNVAHSSTANGSGGGSVSSN) are disordered. Low complexity predominate over residues 15–32 (ASSNAPSANNVAHSSTAN). Ser-107 is subject to Phosphoserine. 2 consecutive B box-type zinc fingers follow at residues 118–163 (NSSI…IVSL) and 184–224 (SGNF…YASI). Cys-123, Cys-126, Cys-145, His-149, Cys-189, His-192, Cys-211, and His-216 together coordinate Zn(2+). Phosphoserine is present on residues Ser-470, Ser-475, and Ser-506. NHL repeat units follow at residues 537–580 (SLSF…FNPD), 584–627 (KFKF…FTAS), 631–674 (LLKF…FDSE), 680–722 (QIVF…IDPD), and 727–770 (LSVK…FNQN).

Interacts with the head domain of rhea and the kinase domain of Ilk. Interacts with AGO1. Interacts with mei-P26. In terms of tissue distribution, expressed in ovarian germline stem cells (at protein level). Expressed ubiquitously in all epithelial cells during early stages of embryogenesis. Specifically expressed at epidermal muscle attachment site.

Vital for larval development. Plays a role in tumor formation. A crucial component for the physical link between integrins and the cytoskeleton in the epidermal muscle attachment sites. In Drosophila melanogaster (Fruit fly), this protein is Protein wech (wech).